Here is a 491-residue protein sequence, read N- to C-terminus: UDP-N-acetylmuramoyl-L-alanyl-D-glutamate--2,6-diaminopimelate ligase (491 aa).

Ser-30 is a binding site for UDP-N-acetyl-alpha-D-muramoyl-L-alanyl-D-glutamate. 108 to 114 (GTNGKTT) contacts ATP. Residues Asn-149, 150–151 (TT), Ser-177, Gln-183, and Arg-185 contribute to the UDP-N-acetyl-alpha-D-muramoyl-L-alanyl-D-glutamate site. Lys-217 bears the N6-carboxylysine mark. Meso-2,6-diaminopimelate-binding positions include Arg-383, 407-410 (DNPR), Gly-458, and Glu-462. The Meso-diaminopimelate recognition motif signature appears at 407 to 410 (DNPR).

Belongs to the MurCDEF family. MurE subfamily. It depends on Mg(2+) as a cofactor. In terms of processing, carboxylation is probably crucial for Mg(2+) binding and, consequently, for the gamma-phosphate positioning of ATP.

It is found in the cytoplasm. It catalyses the reaction UDP-N-acetyl-alpha-D-muramoyl-L-alanyl-D-glutamate + meso-2,6-diaminopimelate + ATP = UDP-N-acetyl-alpha-D-muramoyl-L-alanyl-gamma-D-glutamyl-meso-2,6-diaminopimelate + ADP + phosphate + H(+). It participates in cell wall biogenesis; peptidoglycan biosynthesis. Its function is as follows. Catalyzes the addition of meso-diaminopimelic acid to the nucleotide precursor UDP-N-acetylmuramoyl-L-alanyl-D-glutamate (UMAG) in the biosynthesis of bacterial cell-wall peptidoglycan. The polypeptide is UDP-N-acetylmuramoyl-L-alanyl-D-glutamate--2,6-diaminopimelate ligase (Listeria innocua serovar 6a (strain ATCC BAA-680 / CLIP 11262)).